Consider the following 570-residue polypeptide: PTS system lactose-specific EIICB component (570 aa).

One can recognise a PTS EIIC type-3 domain in the interval 9 to 410; it reads IEKGKPFFEK…VVDIIIYYPF (402 aa). The next 9 membrane-spanning stretches (helical) occupy residues 31–51, 65–85, 104–124, 133–153, 178–198, 223–243, 283–303, 340–360, and 382–402; these read GFIS…IAYV, AILM…VAGT, INFI…ASDP, AFMG…TVIV, FKDL…DLVI, GWIG…VGIH, MFIV…MFMW, VFFI…KLFV, and IIMG…LIVV. Positions 467 to 570 constitute a PTS EIIB type-3 domain; the sequence is QTNVLVLCAG…LDFVQQQFEN (104 aa). Catalysis depends on Cys-474, which acts as the Phosphocysteine intermediate; for EIIB activity. Cys-474 bears the Phosphocysteine; by EIIA mark.

The protein resides in the cell membrane. It carries out the reaction lactose(out) + N(pros)-phospho-L-histidyl-[protein] = lactose 6-phosphate(in) + L-histidyl-[protein]. Its function is as follows. The phosphoenolpyruvate-dependent sugar phosphotransferase system (sugar PTS), a major carbohydrate active transport system, catalyzes the phosphorylation of incoming sugar substrates concomitantly with their translocation across the cell membrane. The enzyme II LacEF PTS system is involved in lactose transport. This chain is PTS system lactose-specific EIICB component, found in Staphylococcus aureus (strain MSSA476).